Consider the following 127-residue polypeptide: Small ribosomal subunit protein uS12 (127 aa).

Aspartate 89 carries the post-translational modification 3-methylthioaspartic acid.

It belongs to the universal ribosomal protein uS12 family. Part of the 30S ribosomal subunit. Contacts proteins S8 and S17. May interact with IF1 in the 30S initiation complex.

In terms of biological role, with S4 and S5 plays an important role in translational accuracy. Interacts with and stabilizes bases of the 16S rRNA that are involved in tRNA selection in the A site and with the mRNA backbone. Located at the interface of the 30S and 50S subunits, it traverses the body of the 30S subunit contacting proteins on the other side and probably holding the rRNA structure together. The combined cluster of proteins S8, S12 and S17 appears to hold together the shoulder and platform of the 30S subunit. The chain is Small ribosomal subunit protein uS12 from Aliarcobacter butzleri (strain RM4018) (Arcobacter butzleri).